Here is a 100-residue protein sequence, read N- to C-terminus: Large ribosomal subunit protein bL28 (100 aa).

The protein belongs to the bacterial ribosomal protein bL28 family.

This Methylobacterium radiotolerans (strain ATCC 27329 / DSM 1819 / JCM 2831 / NBRC 15690 / NCIMB 10815 / 0-1) protein is Large ribosomal subunit protein bL28.